The primary structure comprises 573 residues: Phosphoenolpyruvate-protein phosphotransferase (573 aa).

Histidine 190 acts as the Tele-phosphohistidine intermediate in catalysis. The substrate site is built by arginine 297 and arginine 333. Mg(2+)-binding residues include glutamate 432 and aspartate 456. A phosphoenolpyruvate-binding site is contributed by 455–456; that stretch reads ND. Arginine 466 lines the substrate pocket. The active-site Proton donor is the cysteine 503.

The protein belongs to the PEP-utilizing enzyme family. As to quaternary structure, homodimer. Requires Mg(2+) as cofactor.

It is found in the cytoplasm. It carries out the reaction L-histidyl-[protein] + phosphoenolpyruvate = N(pros)-phospho-L-histidyl-[protein] + pyruvate. Its function is as follows. General (non sugar-specific) component of the phosphoenolpyruvate-dependent sugar phosphotransferase system (sugar PTS). This major carbohydrate active-transport system catalyzes the phosphorylation of incoming sugar substrates concomitantly with their translocation across the cell membrane. Enzyme I transfers the phosphoryl group from phosphoenolpyruvate (PEP) to the phosphoryl carrier protein (HPr). This Staphylococcus carnosus (strain TM300) protein is Phosphoenolpyruvate-protein phosphotransferase (ptsI).